The following is a 113-amino-acid chain: uncharacterized protein (113 aa).

Residues 1–19 (MLSPLSPRIIAAFTTAVGA) form the signal peptide.

This sequence to M.tuberculosis Rv1291c.

This is an uncharacterized protein from Mycobacterium tuberculosis (strain CDC 1551 / Oshkosh).